Consider the following 200-residue polypeptide: uncharacterized protein (200 aa).

This is an uncharacterized protein from Saccharomyces cerevisiae (strain ATCC 204508 / S288c) (Baker's yeast).